The sequence spans 193 residues: Potassium-transporting ATPase KdpC subunit (193 aa).

A helical transmembrane segment spans residues 14 to 34 (ITFTFLVLCGLVYPLIVTGIA).

It belongs to the KdpC family. As to quaternary structure, the system is composed of three essential subunits: KdpA, KdpB and KdpC.

Its subcellular location is the cell membrane. Functionally, part of the high-affinity ATP-driven potassium transport (or Kdp) system, which catalyzes the hydrolysis of ATP coupled with the electrogenic transport of potassium into the cytoplasm. This subunit acts as a catalytic chaperone that increases the ATP-binding affinity of the ATP-hydrolyzing subunit KdpB by the formation of a transient KdpB/KdpC/ATP ternary complex. The sequence is that of Potassium-transporting ATPase KdpC subunit from Bacillus cereus (strain G9842).